Consider the following 1537-residue polypeptide: Flocculation protein FLO1 (1537 aa).

An N-terminal signal peptide occupies residues 1 to 24 (MTMPHRYMFLAVFTLLALTSVASG). Positions 74 to 249 (GGQTDISIDY…GTTVSDDFEG (176 aa)) constitute a PA14 domain. 2 N-linked (GlcNAc...) asparagine glycosylation sites follow: N135 and N187. The segment at 197–240 (GGSLPPNIEGTVYMYAGYYYPMKVVYSNAVSWGTLPISVTLPDG) is sugar recognition. An N-linked (GlcNAc...) asparagine glycan is attached at N262. 18 tandem repeats follow at residues 278 to 322 (TTTE…STII), 323 to 367 (TTTE…TTAI), 368 to 412 (TTTE…TTAM), 413 to 457 (TTTQ…TTAM), 458 to 502 (TTTQ…TTAM), 503 to 547 (TTTQ…TTAM), 548 to 592 (TTPQ…TTAI), 593 to 637 (TTTE…TTAI), 638 to 682 (TTTQ…TTAM), 683 to 727 (TTTQ…TTAM), 728 to 772 (TTTQ…GLIS), 773 to 817 (TTTE…GLVT), 818 to 862 (TTTE…GLIS), 863 to 907 (TTTE…GLIS), 908 to 952 (TTTE…GLIS), 953 to 997 (TTTE…GLIS), 998 to 1042 (TTTE…GLVT), and 1043 to 1087 (TTTE…ISSS). Residues 278-1087 (TTTEPWTGTF…KTPTTAISSS (810 aa)) are 18 X 45 AA approximate tandem repeats, Thr-rich. N-linked (GlcNAc...) asparagine glycans are attached at residues N329, N374, N419, N464, N509, N554, N599, N644, N689, and N734. Disordered regions lie at residues 770–799 (LIST…NGQP) and 860–889 (LIST…NGQP). Low complexity predominate over residues 773–795 (TTTEPWTGTFTSTSTEMTTVTGT). Residues 863-885 (TTTEPWTGTFTSTSTEMTTITGT) are compositionally biased toward low complexity. The tract at residues 995–1024 (LISTTTEPWTGTFTSTSTEMTTVTGTNGQP) is disordered. Residues 998-1020 (TTTEPWTGTFTSTSTEMTTVTGT) are compositionally biased toward low complexity. N-linked (GlcNAc...) asparagine glycosylation occurs at N1114. A run of 2 repeats spans residues 1118-1137 (VISS…TSSP) and 1138-1157 (VISS…IFSE). The interval 1118 to 1157 (VISSSVISSSVTSSLFTSSPVISSSVISSSTTTSTSIFSE) is 2 X 20 AA approximate tandem repeats, Ser/Thr-rich. The span at 1161 to 1220 (SSVIPTSSSTSGSSESETSSAGSVSSSSFISSESSKSPTYSSSSLPLVTSATTSQETASS) shows a compositional bias: low complexity. The interval 1161–1232 (SSVIPTSSST…PATTTKTSEQ (72 aa)) is disordered. A compositionally biased stretch (polar residues) spans 1222–1232 (PPATTTKTSEQ). Repeat copies occupy residues 1226 to 1276 (TTKT…CPIS), 1291 to 1341 (TTET…CPIS), 1342 to 1392 (TTES…RPQT), 1408 to 1416 (ETTTNTLAA), 1417 to 1425 (ETTTNTVAA), and 1426 to 1434 (ETITNTGAA). The segment at 1226 to 1392 (TTKTSEQTTL…TVYPTWRPQT (167 aa)) is 3 X 51 AA approximate repeats, Ser/Thr-rich. Residues 1392–1404 (TANEESVSSKMNS) are compositionally biased toward polar residues. The interval 1392-1414 (TANEESVSSKMNSATGETTTNTL) is disordered. The segment covering 1405 to 1414 (ATGETTTNTL) has biased composition (low complexity). Positions 1408–1434 (ETTTNTLAAETTTNTVAAETITNTGAA) are 3 X 9 AA approximate tandem repeats, Thr-rich. Residues 1468 to 1497 (VSVSETGNTKSLTSSGLSTMSQQPRSTPAS) are disordered. The span at 1472 to 1497 (ETGNTKSLTSSGLSTMSQQPRSTPAS) shows a compositional bias: polar residues. The GPI-anchor amidated glycine moiety is linked to residue G1514. Positions 1515–1537 (SANSLLAGSGLSVFIASLLLAII) are cleaved as a propeptide — removed in mature form.

Belongs to the flocculin family. In terms of processing, extensively N- and O-glycosylated. Post-translationally, the GPI-anchor is attached to the protein in the endoplasmic reticulum and serves to target the protein to the cell surface. There, the glucosamine-inositol phospholipid moiety is cleaved off and the GPI-modified mannoprotein is covalently attached via its lipidless GPI glycan remnant to the 1,6-beta-glucan of the outer cell wall layer.

The protein localises to the cell membrane. It is found in the secreted. The protein resides in the cell wall. Its function is as follows. Cell wall protein that participates directly in adhesive cell-cell interactions during yeast flocculation, a reversible, asexual and Ca(2+)-dependent process in which cells adhere to form aggregates (flocs) consisting of thousands of cells. The lectin-like protein sticks out of the cell wall of flocculent cells and selectively binds mannose residues in the cell walls of adjacent cells. Activity is inhibited by mannose, but not by glucose, maltose, sucrose or galactose. Also involved in cell-substrate adhesion. The sequence is that of Flocculation protein FLO1 (FLO1) from Saccharomyces cerevisiae (strain ATCC 204508 / S288c) (Baker's yeast).